Here is a 269-residue protein sequence, read N- to C-terminus: Hemin import ATP-binding protein HmuV (269 aa).

The region spanning 5 to 242 (IETHSVTMRI…GLIRKVFEVC (238 aa)) is the ABC transporter domain. An ATP-binding site is contributed by 37–44 (GPNGAGKS).

This sequence belongs to the ABC transporter superfamily. Heme (hemin) importer (TC 3.A.1.14.5) family. As to quaternary structure, the complex is composed of two ATP-binding proteins (HmuV), two transmembrane proteins (HmuU) and a solute-binding protein (HmuT).

The protein resides in the cell inner membrane. Part of the ABC transporter complex HmuTUV involved in hemin import. Responsible for energy coupling to the transport system. The polypeptide is Hemin import ATP-binding protein HmuV (Nitrobacter winogradskyi (strain ATCC 25391 / DSM 10237 / CIP 104748 / NCIMB 11846 / Nb-255)).